A 268-amino-acid polypeptide reads, in one-letter code: Proenkephalin-A (268 aa).

Positions 1–24 (MARFLRLCTWLLALGSCLLATVQA) are cleaved as a signal peptide. Disulfide bonds link cysteine 26/cysteine 48, cysteine 30/cysteine 52, and cysteine 33/cysteine 65. Residues 163 to 184 (TGDNRAKDSHQQESTNNDEDMS) are disordered. Propeptides lie at residues 197-208 (SPQLEDEAKELQ) and 218-228 (VGRPEWWMDYQ). Serine 252 is subject to Phosphoserine.

This sequence belongs to the opioid neuropeptide precursor family. Proenkephalin-A is cleaved by CTSL to generate Met-enkephalin. Post-translationally, processed and degraded by ACE. In terms of processing, probably cleaved by ACE. Processed by ACE to generate Met-enkephalin in the nucleus accumbens of the brain. Post-translationally, the N-terminal domain contains 6 conserved cysteines thought to be involved in disulfide bonding and/or processing. In terms of tissue distribution, spermatogenic and somatic cells.

It is found in the cytoplasmic vesicle. It localises to the secretory vesicle. Its subcellular location is the chromaffin granule lumen. The protein localises to the secreted. Functionally, neuropeptide that competes with and mimic the effects of opiate drugs. They play a role in a number of physiologic functions, including pain perception and responses to stress. Met-enkephalin-Arg-Phe neuropeptide acts as a strong ligand of Mu-type opioid receptor OPRM1. Met-enkephalin-Arg-Phe-binding to OPRM1 in the nucleus accumbens of the brain increases activation of OPRM1, leading to long-term synaptic depression of glutamate release. In terms of biological role, increases glutamate release in the striatum and decreases GABA concentration in the striatum. Its function is as follows. Increases glutamate release in the striatum. The sequence is that of Proenkephalin-A (Penk) from Mus musculus (Mouse).